The primary structure comprises 503 residues: Maturase K (503 aa).

The protein belongs to the intron maturase 2 family. MatK subfamily.

The protein resides in the plastid. The protein localises to the chloroplast. Functionally, usually encoded in the trnK tRNA gene intron. Probably assists in splicing its own and other chloroplast group II introns. In Vicia sativa (Spring vetch), this protein is Maturase K.